The chain runs to 360 residues: Glutamate 5-kinase (360 aa).

Residue lysine 7 coordinates ATP. Substrate-binding residues include serine 47, aspartate 134, and asparagine 146. ATP is bound by residues 166–167 (TD) and 210–216 (TGGISTK). In terms of domain architecture, PUA spans 275 to 356 (VGKITLDDGA…SSIIVVHRDV (82 aa)).

It belongs to the glutamate 5-kinase family.

Its subcellular location is the cytoplasm. The enzyme catalyses L-glutamate + ATP = L-glutamyl 5-phosphate + ADP. Its pathway is amino-acid biosynthesis; L-proline biosynthesis; L-glutamate 5-semialdehyde from L-glutamate: step 1/2. Its function is as follows. Catalyzes the transfer of a phosphate group to glutamate to form L-glutamate 5-phosphate. The protein is Glutamate 5-kinase of Prochlorococcus marinus (strain MIT 9312).